Here is a 185-residue protein sequence, read N- to C-terminus: Peroxynitrite isomerase (185 aa).

Positions 1-21 (MHHPARELPFPDALRPGARPA) are disordered. A GXWXGXG motif is present at residues 34–40 (GTWRGTG). Position 171 (His-171) interacts with heme b.

It belongs to the nitrobindin family. As to quaternary structure, homodimer. Heme b is required as a cofactor.

The catalysed reaction is peroxynitrite = nitrate. The protein operates within nitrogen metabolism. Heme-binding protein able to scavenge peroxynitrite and to protect free L-tyrosine against peroxynitrite-mediated nitration, by acting as a peroxynitrite isomerase that converts peroxynitrite to nitrate. Therefore, this protein likely plays a role in peroxynitrite sensing and in the detoxification of reactive nitrogen and oxygen species (RNS and ROS, respectively). Is able to bind nitric oxide (NO) in vitro, but may act as a sensor of peroxynitrite levels in vivo. The sequence is that of Peroxynitrite isomerase from Streptomyces griseus subsp. griseus (strain JCM 4626 / CBS 651.72 / NBRC 13350 / KCC S-0626 / ISP 5235).